Reading from the N-terminus, the 286-residue chain is 4-hydroxybenzoate octaprenyltransferase (286 aa).

A run of 7 helical transmembrane segments spans residues 20–40 (IGILLLLWPTLWGLWLAADGM), 43–63 (PMILVIFVLGTILMRSAGCAI), 83–103 (LATGIISSREALLVAAGLSLC), 135–155 (FFAMPQAYLGIAFSFGIPMAF), 160–180 (GTVPPLAWLLVLANLFWVIAY), 209–229 (VAGILLCHITFLSILTYAGIL), and 234–254 (IWFYGALLVALGLVIVQYTMI).

Belongs to the UbiA prenyltransferase family. The cofactor is Mg(2+).

It localises to the cell inner membrane. It carries out the reaction all-trans-octaprenyl diphosphate + 4-hydroxybenzoate = 4-hydroxy-3-(all-trans-octaprenyl)benzoate + diphosphate. Its pathway is cofactor biosynthesis; ubiquinone biosynthesis. Its function is as follows. Catalyzes the prenylation of para-hydroxybenzoate (PHB) with an all-trans polyprenyl group. Mediates the second step in the final reaction sequence of ubiquinone-8 (UQ-8) biosynthesis, which is the condensation of the polyisoprenoid side chain with PHB, generating the first membrane-bound Q intermediate 3-octaprenyl-4-hydroxybenzoate. The polypeptide is 4-hydroxybenzoate octaprenyltransferase (Nitrosomonas eutropha (strain DSM 101675 / C91 / Nm57)).